The sequence spans 572 residues: E3 ubiquitin-protein ligase ZFP91 (572 aa).

Over residues 1-12 (MPGETEEPRSPE) the composition is skewed to basic and acidic residues. The disordered stretch occupies residues 1–308 (MPGETEEPRS…PRLPKRRKKP (308 aa)). A compositionally biased stretch (low complexity) spans 61 to 70 (AAAAAAAAAA). Basic residues predominate over residues 72-85 (SRRRKAEYPRRRRS). A phosphoserine mark is found at S86 and S106. The span at 122-131 (LTTDKDPKEE) shows a compositional bias: basic and acidic residues. Low complexity predominate over residues 143–162 (SITTTRASRSWRSSSRTSIS). Over residues 209 to 225 (SDEEEEEEEEMLISEEE) the composition is skewed to acidic residues. 2 stretches are compositionally biased toward basic and acidic residues: residues 226–247 (IPFK…ETPK) and 254–271 (KVKE…VEVE). Positions 272–284 (VKEEENEIREDEE) are enriched in acidic residues. 5 C2H2-type zinc fingers span residues 313–338 (VRCE…KYQH), 344–368 (YVCP…AKHH), 374–396 (YICE…RMIH), 402–424 (LQCE…MKKH), and 432–455 (FSCN…AKSH). The interval 340 to 370 (LKKKYVCPHPSCGRLFRLQKQLLRHAKHHTD) is interaction with MAP3K14/NIK.

Belongs to the krueppel C2H2-type zinc-finger protein family. Interacts with MAP3K14/NIK. As to expression, found in all the examined tissues including brain, heart, kidney, lung, liver, spleen, thymus, skeletal muscle, ovary and testis.

The protein resides in the nucleus. The catalysed reaction is S-ubiquitinyl-[E2 ubiquitin-conjugating enzyme]-L-cysteine + [acceptor protein]-L-lysine = [E2 ubiquitin-conjugating enzyme]-L-cysteine + N(6)-ubiquitinyl-[acceptor protein]-L-lysine.. It functions in the pathway protein modification; protein ubiquitination. Its function is as follows. Atypical E3 ubiquitin-protein ligase that mediates 'Lys-63'-linked ubiquitination of MAP3K14/NIK, leading to stabilize and activate MAP3K14/NIK. It thereby acts as an activator of the non-canonical NF-kappa-B2/NFKB2 pathway. May also play an important role in cell proliferation and/or anti-apoptosis. This chain is E3 ubiquitin-protein ligase ZFP91 (Zfp91), found in Mus musculus (Mouse).